Consider the following 202-residue polypeptide: GTP cyclohydrolase 1 (202 aa).

Zn(2+) contacts are provided by Cys90, His93, and Cys163.

Belongs to the GTP cyclohydrolase I family. As to quaternary structure, toroid-shaped homodecamer, composed of two pentamers of five dimers.

The enzyme catalyses GTP + H2O = 7,8-dihydroneopterin 3'-triphosphate + formate + H(+). It functions in the pathway cofactor biosynthesis; 7,8-dihydroneopterin triphosphate biosynthesis; 7,8-dihydroneopterin triphosphate from GTP: step 1/1. This chain is GTP cyclohydrolase 1, found in Mycolicibacterium vanbaalenii (strain DSM 7251 / JCM 13017 / BCRC 16820 / KCTC 9966 / NRRL B-24157 / PYR-1) (Mycobacterium vanbaalenii).